The following is a 402-amino-acid chain: UPF0261 protein y4oU (402 aa).

Belongs to the UPF0261 family.

The protein is UPF0261 protein y4oU of Sinorhizobium fredii (strain NBRC 101917 / NGR234).